Consider the following 455-residue polypeptide: ATP-dependent protease ATPase subunit HslU (455 aa).

ATP contacts are provided by residues Val-23, 65-70 (GVGKTE), Asp-266, Glu-333, and Arg-405.

It belongs to the ClpX chaperone family. HslU subfamily. As to quaternary structure, a double ring-shaped homohexamer of HslV is capped on each side by a ring-shaped HslU homohexamer. The assembly of the HslU/HslV complex is dependent on binding of ATP.

It is found in the cytoplasm. Functionally, ATPase subunit of a proteasome-like degradation complex; this subunit has chaperone activity. The binding of ATP and its subsequent hydrolysis by HslU are essential for unfolding of protein substrates subsequently hydrolyzed by HslV. HslU recognizes the N-terminal part of its protein substrates and unfolds these before they are guided to HslV for hydrolysis. This Xanthomonas axonopodis pv. citri (strain 306) protein is ATP-dependent protease ATPase subunit HslU.